The primary structure comprises 494 residues: Cobyric acid synthase (494 aa).

Positions 249-443 constitute a GATase cobBQ-type domain; that stretch reads EINVTILRLP…LHGIFDNGAW (195 aa). The active-site Nucleophile is Cys330. The active site involves His435.

Belongs to the CobB/CobQ family. CobQ subfamily.

It participates in cofactor biosynthesis; adenosylcobalamin biosynthesis. Its function is as follows. Catalyzes amidations at positions B, D, E, and G on adenosylcobyrinic A,C-diamide. NH(2) groups are provided by glutamine, and one molecule of ATP is hydrogenolyzed for each amidation. The sequence is that of Cobyric acid synthase from Crocosphaera subtropica (strain ATCC 51142 / BH68) (Cyanothece sp. (strain ATCC 51142)).